Reading from the N-terminus, the 279-residue chain is DegV domain-containing protein SA1258 (279 aa).

Residues Gln4–Lys278 form the DegV domain. The hexadecanoate site is built by Thr61 and Ser93.

Its function is as follows. May bind long-chain fatty acids, such as palmitate, and may play a role in lipid transport or fatty acid metabolism. The polypeptide is DegV domain-containing protein SA1258 (Staphylococcus aureus (strain N315)).